Reading from the N-terminus, the 457-residue chain is Argininosuccinate lyase (457 aa).

This sequence belongs to the lyase 1 family. Argininosuccinate lyase subfamily.

The protein localises to the cytoplasm. It catalyses the reaction 2-(N(omega)-L-arginino)succinate = fumarate + L-arginine. The protein operates within amino-acid biosynthesis; L-arginine biosynthesis; L-arginine from L-ornithine and carbamoyl phosphate: step 3/3. In Klebsiella pneumoniae (strain 342), this protein is Argininosuccinate lyase.